The sequence spans 495 residues: MLPVASLLILVPLIFAVVTFFTKTKQLAAGFGFLGSLATLGLTLYAYLNFDSSTAAMQFYESVSWIPFLGVNYSVGIDGVSMPLILLNAIVIPFMILFTWKEEMESPNRFYGLILTMQAAVIGVFVALDFVVFYIFWELTLVPLFFIVNLWGGANRAHASYKFFIYTHVASLVMLLGIFGLFYTALNQTGVPTFDIRELIAQFQFFEPGLMKDGIFLAILFGFLAKLPAFPFHSWLPDAYSEAPTAGSILFILLKIGGYGLFRISLPMLPNTGSPQLMIMILGLLGSVSILYGALLALRQKDLKRMIAYSSLSHMGYVILGSAGLVTLSVSGAMFQQFSHGLIMSIMFMSAGAIQTAAGTRIINELGGLAKKMPMLTVAMMVGFMASLGLPGLTGFIAEFLVLTFTFTNLPVFVVIALLAIVVTAGYHLWAMQRAMFGVYNEKLGDVRDINSIQVFSMAVIALLVLYFGLNPSPVLDMMINNSEAIVSLAAGMGV.

15 helical membrane passes run 1–21 (MLPV…VTFF), 27–47 (LAAG…LYAY), 57–77 (MQFY…SVGI), 80–100 (VSMP…LFTW), 108–128 (NRFY…FVAL), 130–150 (FVVF…IVNL), 163–183 (FFIY…GLFY), 215–235 (IFLA…FHSW), 249–269 (ILFI…LPML), 277–297 (LMIM…ALLA), 315–335 (MGYV…GAMF), 338–358 (FSHG…QTAA), 378–398 (VAMM…GFIA), 412–432 (VFVV…LWAM), and 450–470 (INSI…YFGL).

Belongs to the complex I subunit 4 family. In terms of assembly, the FPO complex is composed of at least 13 different subunits. FpoA, FpoH, FpoJ, FpoK, FpoL, FpoM and FpoN proteins constitute the membrane sector of the complex.

The protein localises to the cell membrane. The catalysed reaction is methanophenazine + reduced coenzyme F420-(gamma-L-Glu)(n) = dihydromethanophenazine + oxidized coenzyme F420-(gamma-L-Glu)(n) + H(+). Component of the F(420)H(2) dehydrogenase (FPO complex) which is part of the energy-conserving F(420)H(2):heterodisulfide oxidoreductase system. The membrane-bound electron transfer system of the complex plays an important role in the metabolism of methylotrophic methanogens when the organisms grow on methanol or methylamines. Catalyzes the oxidation of methanophenazine to dihydromethanophenazine. It shuttles electrons from F(420)H(2), via FAD and iron-sulfur (Fe-S) centers, to methanophenazine (an electron carrier in the membrane). It couples the redox reaction to proton translocation (for every two electrons transferred, two hydrogen ions are translocated across the cytoplasmic membrane), and thus conserves the redox energy in a proton gradient. It also catalyzes the oxidation of F(420)H(2) with quinones such as 2,3-dimethyl-1,4-naphthoquinone, 2-methyl-1,4-naphthoquinone and tetramethyl-p-benzoquinone. The protein is F(420)H(2) dehydrogenase subunit M (fpoM) of Methanosarcina mazei (strain ATCC BAA-159 / DSM 3647 / Goe1 / Go1 / JCM 11833 / OCM 88) (Methanosarcina frisia).